Reading from the N-terminus, the 138-residue chain is Regulator of ribonuclease activity B (138 aa).

Positions 111–138 are disordered; that stretch reads WGTYFEDPNGEEGDDDDYVDEDDDGVRH. A compositionally biased stretch (acidic residues) spans 118-138; it reads PNGEEGDDDDYVDEDDDGVRH.

Belongs to the RraB family. Interacts with the C-terminal region of Rne.

The protein localises to the cytoplasm. Functionally, globally modulates RNA abundance by binding to RNase E (Rne) and regulating its endonucleolytic activity. Can modulate Rne action in a substrate-dependent manner by altering the composition of the degradosome. The sequence is that of Regulator of ribonuclease activity B from Salmonella typhi.